Here is a 396-residue protein sequence, read N- to C-terminus: Glycerate kinase (396 aa).

Belongs to the glycerate kinase type-2 family.

Its subcellular location is the cytoplasm. It catalyses the reaction (R)-glycerate + ATP = (2R)-3-phosphoglycerate + ADP + H(+). This is Glycerate kinase (GLYCTK) from Macaca fascicularis (Crab-eating macaque).